Here is a 69-residue protein sequence, read N- to C-terminus: ATP synthase F(0) complex subunit e, mitochondrial (69 aa).

Residue Lys-34 is modified to N6-acetyllysine.

This sequence belongs to the ATPase e subunit family. Component of the ATP synthase complex composed at least of ATP5F1A/subunit alpha, ATP5F1B/subunit beta, ATP5MC1/subunit c (homooctomer), MT-ATP6/subunit a, MT-ATP8/subunit 8, ATP5ME/subunit e, ATP5MF/subunit f, ATP5MG/subunit g, ATP5MK/subunit k, ATP5MJ/subunit j, ATP5F1C/subunit gamma, ATP5F1D/subunit delta, ATP5F1E/subunit epsilon, ATP5PF/subunit F6, ATP5PB/subunit b, ATP5PD/subunit d, ATP5PO/subunit OSCP. ATP synthase complex consists of a soluble F(1) head domain (subunits alpha(3) and beta(3)) - the catalytic core - and a membrane F(0) domain - the membrane proton channel (subunits c, a, 8, e, f, g, k and j). These two domains are linked by a central stalk (subunits gamma, delta, and epsilon) rotating inside the F1 region and a stationary peripheral stalk (subunits F6, b, d, and OSCP).

It is found in the mitochondrion. It localises to the mitochondrion inner membrane. Functionally, subunit e, of the mitochondrial membrane ATP synthase complex (F(1)F(0) ATP synthase or Complex V) that produces ATP from ADP in the presence of a proton gradient across the membrane which is generated by electron transport complexes of the respiratory chain. ATP synthase complex consist of a soluble F(1) head domain - the catalytic core - and a membrane F(1) domain - the membrane proton channel. These two domains are linked by a central stalk rotating inside the F(1) region and a stationary peripheral stalk. During catalysis, ATP synthesis in the catalytic domain of F(1) is coupled via a rotary mechanism of the central stalk subunits to proton translocation. In vivo, can only synthesize ATP although its ATP hydrolase activity can be activated artificially in vitro. Part of the complex F(0) domain. The polypeptide is ATP synthase F(0) complex subunit e, mitochondrial (Cricetulus longicaudatus (Long-tailed dwarf hamster)).